We begin with the raw amino-acid sequence, 217 residues long: Adapter protein MecA (217 aa).

This sequence belongs to the MecA family. In terms of assembly, homodimer.

Enables the recognition and targeting of unfolded and aggregated proteins to the ClpC protease or to other proteins involved in proteolysis. The sequence is that of Adapter protein MecA from Listeria monocytogenes serovar 1/2a (strain ATCC BAA-679 / EGD-e).